Consider the following 330-residue polypeptide: tRNA (cytosine(38)-C(5))-methyltransferase (330 aa).

Residues 7-330 (LRVLELYSGI…ISLLLEPLNF (324 aa)) enclose the SAM-dependent MTase C5-type domain. Cys81 is an active-site residue.

It belongs to the class I-like SAM-binding methyltransferase superfamily. C5-methyltransferase family.

The protein localises to the cytoplasm. It is found in the nucleus. It catalyses the reaction cytidine(38) in tRNA + S-adenosyl-L-methionine = 5-methylcytidine(38) in tRNA + S-adenosyl-L-homocysteine + H(+). In terms of biological role, specifically methylates cytosine 38 in the anticodon loop of tRNA(Asp). Can also methylate cytosine 38 in tRNA(Glu), albeit to a lower level, but not tRNA(Lys). Pmt1-dependent tRNA methylation is induced by nitrogen limitation and depends on the nutrient-sensing protein kinase sck2. Does not have DNA-methylation activity. This Schizosaccharomyces pombe (strain 972 / ATCC 24843) (Fission yeast) protein is tRNA (cytosine(38)-C(5))-methyltransferase (pmt1).